We begin with the raw amino-acid sequence, 176 residues long: Interleukin-1 receptor antagonist protein (176 aa).

The signal sequence occupies residues 1 to 25; it reads METCRCPLSYLISFLLFLSHSETAC. Cysteines 91 and 141 form a disulfide. Residue Asn-109 is glycosylated (N-linked (GlcNAc...) asparagine).

Belongs to the IL-1 family.

Its subcellular location is the secreted. Anti-inflammatory antagonist of interleukin-1 family of proinflammatory cytokines such as interleukin-1beta/IL1B and interleukin-1alpha/IL1A. Protects from immune dysregulation and uncontrolled systemic inflammation triggered by IL1 for a range of innate stimulatory agents such as pathogens. This chain is Interleukin-1 receptor antagonist protein (IL1RN), found in Canis lupus familiaris (Dog).